The chain runs to 434 residues: Beta-enolase (434 aa).

A2 is modified (N-acetylalanine). T72 carries the post-translational modification Phosphothreonine. S83 and S157 each carry phosphoserine. The substrate site is built by H158 and E167. Position 176 is a phosphoserine (S176). Phosphothreonine is present on T205. E210 functions as the Proton donor in the catalytic mechanism. Residue T229 is modified to Phosphothreonine. At Y236 the chain carries Phosphotyrosine. D245 contributes to the Mg(2+) binding site. S263 is subject to Phosphoserine. Positions 293 and 318 each coordinate substrate. Positions 293 and 318 each coordinate Mg(2+). The Proton acceptor role is filled by K343. Residues 370-373 (SHRS) and K394 each bind substrate.

Belongs to the enolase family. Mammalian enolase is composed of 3 isozyme subunits, alpha, beta and gamma, which can form homodimers or heterodimers which are cell-type and development-specific. Interacts with PNKD. Mg(2+) serves as cofactor. In terms of tissue distribution, the alpha/alpha homodimer is expressed in embryo and in most adult tissues. The alpha/beta heterodimer and the beta/beta homodimer are found in striated muscle, and the alpha/gamma heterodimer and the gamma/gamma homodimer in neurons.

It is found in the cytoplasm. The catalysed reaction is (2R)-2-phosphoglycerate = phosphoenolpyruvate + H2O. Its pathway is carbohydrate degradation; glycolysis; pyruvate from D-glyceraldehyde 3-phosphate: step 4/5. Functionally, glycolytic enzyme that catalyzes the conversion of 2-phosphoglycerate to phosphoenolpyruvate. Appears to have a function in striated muscle development and regeneration. The sequence is that of Beta-enolase (ENO3) from Oryctolagus cuniculus (Rabbit).